The chain runs to 787 residues: MQNKVLRGILFKNVPLGYSYNRSIRHPTFGNSIIRWASTQVKTSSDVLQRSFDDHLYWTEINKQNYSSKEGWGSITKRLKGNKLTTNRSGLFNNEYLTSPEGLKLFSQVSLEKSQKIVDKLRSDRTPEGLRLYVQNLDLLSDTLCRVIDLCEFIRSSHPDYKFVEAAQDCYEEMFEFMNMLNTDVNLCFTLKHVLENKEIASKLSEEELRVGRILLEDFEKSGIYMKPEVREQFITLSQSISVIGQEFISNTDFVKDNNVVVSCNQLDSLGIDPELLSQIEKDIAGKNYKIPTYGYIPFALLKSCPSEEIREKIWVAVHNCSNEQIKRLTDLVKLRAVLSQLLGKKSYAEYQLEGKMAKNPKEVIEFIKTLMDFTKPMAAKELDGIAEKKLTIKSNGSNLSVCDILKTVRPWDRDYYSAIEREQTSAKNLYGSEEVLKYFTLGNVMQGLSNLFQKIYGIKLELDVPKIGETWSPEVRKINVISEDEGLIGIIYCDLFERSGKTSNAAHFTICCSRDISPYETEDSTTQIAIDSKGTRFQLPIISLVCNFSKTMISETDSVCFLHLPEVETLFHEMGHAMHSMLGRTKLQNISGTRCATDFVELPSILMEYFARDPRVLETIGKHYLTKETVKREMLEPHLQDLKYLQHCETYSQAKMAMLDQTLHGETISSHLDHLDVVKLYQDLERQLGVLVDDKSNWCGKFGHLFGYSAVYYSYLFDRAIASKIWGALFERNPFSRASGDKYRNSVLQWGGSRDPWHCIASALDKPELAKGDDEAIKYIGSTNQL.

Residues Met-1 to Trp-36 constitute a mitochondrion transit peptide. His-573 contributes to the Zn(2+) binding site. Residue Glu-574 is part of the active site. Positions 577 and 580 each coordinate Zn(2+).

This sequence belongs to the peptidase M3 family. It depends on Zn(2+) as a cofactor.

The protein localises to the mitochondrion matrix. The enzyme catalyses Release of an N-terminal octapeptide as second stage of processing of some proteins imported into the mitochondrion.. Cleaves proteins, imported into the mitochondrion, to their mature size. While most mitochondrial precursor proteins are processed to the mature form in one step by mitochondrial processing peptidase (MPP), the sequential cleavage by MIP of an octapeptide after initial processing by MPP is a required step for a subgroup of nuclear-encoded precursor proteins destined for the matrix or the inner membrane. The protein is Mitochondrial intermediate peptidase (OCT1) of Vanderwaltozyma polyspora (strain ATCC 22028 / DSM 70294 / BCRC 21397 / CBS 2163 / NBRC 10782 / NRRL Y-8283 / UCD 57-17) (Kluyveromyces polysporus).